The sequence spans 327 residues: HTH-type transcriptional regulator EbgR (327 aa).

The region spanning 1–57 (MATLKDIAIEAGVSLATVSRVLNDDPTLNVKEETKHRILEIAEKLEYKTSSARKLQT) is the HTH lacI-type domain. The H-T-H motif DNA-binding region spans 4–23 (LKDIAIEAGVSLATVSRVLN).

In terms of biological role, repressor for beta galactosidase alpha and beta subunits (ebgA and ebgC). Binds lactose as an inducer. In Escherichia coli (strain K12), this protein is HTH-type transcriptional regulator EbgR (ebgR).